Here is a 66-residue protein sequence, read N- to C-terminus: DNA-directed RNA polymerase subunit omega (66 aa).

Belongs to the RNA polymerase subunit omega family. In terms of assembly, the RNAP catalytic core consists of 2 alpha, 1 beta, 1 beta' and 1 omega subunit. When a sigma factor is associated with the core the holoenzyme is formed, which can initiate transcription.

The catalysed reaction is RNA(n) + a ribonucleoside 5'-triphosphate = RNA(n+1) + diphosphate. Functionally, promotes RNA polymerase assembly. Latches the N- and C-terminal regions of the beta' subunit thereby facilitating its interaction with the beta and alpha subunits. This Clostridium botulinum (strain Alaska E43 / Type E3) protein is DNA-directed RNA polymerase subunit omega.